A 177-amino-acid polypeptide reads, in one-letter code: Ribosome maturation factor RimM (177 aa).

The 73-residue stretch at 104-176 (DGEYYFFEIL…KIIVNMPEWL (73 aa)) folds into the PRC barrel domain.

Belongs to the RimM family. In terms of assembly, binds ribosomal protein uS19.

It localises to the cytoplasm. Functionally, an accessory protein needed during the final step in the assembly of 30S ribosomal subunit, possibly for assembly of the head region. Essential for efficient processing of 16S rRNA. May be needed both before and after RbfA during the maturation of 16S rRNA. It has affinity for free ribosomal 30S subunits but not for 70S ribosomes. The protein is Ribosome maturation factor RimM of Fervidobacterium nodosum (strain ATCC 35602 / DSM 5306 / Rt17-B1).